The primary structure comprises 140 residues: Sperm protein associated with the nucleus on the X chromosome N3 (140 aa).

Polar residues-rich tracts occupy residues Met-1–Asn-20, Ile-62–Pro-79, and Glu-131–Asp-140. The segment at Met-1–Asp-140 is disordered.

The protein belongs to the SPAN-X family.

This chain is Sperm protein associated with the nucleus on the X chromosome N3 (SPANXN3), found in Pan troglodytes (Chimpanzee).